The chain runs to 119 residues: Basic phospholipase A2 (119 aa).

7 cysteine pairs are disulfide-bonded: Cys11-Cys71, Cys27-Cys118, Cys29-Cys45, Cys44-Cys99, Cys51-Cys92, Cys60-Cys85, and Cys78-Cys90. Tyr28, Gly30, and Gly32 together coordinate Ca(2+). His48 is an active-site residue. Ca(2+) is bound at residue Asp49. Residue Asp93 is part of the active site.

It belongs to the phospholipase A2 family. Group I subfamily. D49 sub-subfamily. Ca(2+) is required as a cofactor. Expressed by the venom gland.

The protein localises to the secreted. The enzyme catalyses a 1,2-diacyl-sn-glycero-3-phosphocholine + H2O = a 1-acyl-sn-glycero-3-phosphocholine + a fatty acid + H(+). In terms of biological role, snake venom phospholipase A2 (PLA2) that has several activities. It is myotoxic, has weak anticoagulant activity and inhibits neuromuscular transmission by blocking acetylcholine release from the nerve termini. PLA2 catalyzes the calcium-dependent hydrolysis of the 2-acyl groups in 3-sn-phosphoglycerides. The polypeptide is Basic phospholipase A2 (Hydrophis schistosus (Beaked sea snake)).